Reading from the N-terminus, the 350-residue chain is m7GpppX diphosphatase (350 aa).

S2 is subject to N-acetylserine. At S60 the chain carries Phosphoserine. Position 66 is a phosphothreonine (T66). At T66 the chain carries Phosphothreonine; by YAK1. Y70 is subject to Phosphotyrosine. A Phosphothreonine modification is found at T120. Substrate contacts are provided by residues E171, K196, and 259-270 (HYQPSYYHFHIH). The Histidine triad motif signature appears at 266–270 (HFHIH). Residue H268 is the Nucleophile of the active site.

Belongs to the HIT family. In terms of assembly, homodimer. Forms heterodimer with DCS2; the interaction inhibits the DCS1 scavenger decapping activity during post-diauxic growth. Phosphorylated. Phosphorylation occurs upon glucose deprivation.

Its subcellular location is the cytoplasm. It localises to the perinuclear region. The protein localises to the P-body. It carries out the reaction a 5'-end (N(7)-methyl 5'-triphosphoguanosine)-ribonucleoside in mRNA + H2O = N(7)-methyl-GMP + a 5'-end diphospho-ribonucleoside in mRNA + 2 H(+). The hydrolytic product 7-methylguanosine diphosphate (m7GDP) efficiently inhibits the decapping scavenger activity and acts as a competitive inhibitor in vitro. In terms of biological role, decapping scavenger enzyme that catalyzes the cleavage of a residual cap structure following the degradation of mRNAs by the 3'-&gt;5' exosome-mediated mRNA decay pathway. Hydrolyzes cap analog structures like 7-methylguanosine nucleoside triphosphate (m7GpppG) and tri-methyl guanosine nucleoside triphosphate (m3(2,2,7)GpppG) with up to 10 nucleotide substrates (small capped oligoribonucleotides) and specifically releases 5'-phosphorylated RNA fragments and 7-methylguanosine monophosphate (m7GMP) or tri-methyl guanosine nucleoside monophosphate (m3(2,2,7)GMP), respectively. Does not hydrolyze unmethylated cap analog (GpppG) and shows no decapping activity on intact m7GpppG-capped mRNA molecules longer than 25 nucleotides. Does not hydrolyze 7-methylguanosine diphosphate (m7GDP) and tri-methylguanosine diphosphate (m3(2,2,7)GDP) to (m(7)GMP) and m3(2,2,7)GMP, respectively. May also play a role in the 5'-&gt;3 mRNA decay pathway; m7GDP, the downstream product released by the 5'-&gt;3' mRNA mediated decapping activity, may be also converted by DCS1 to m7GMP. Binds to m7GpppG and strongly to m7GDP. May also regulate the 5'-&gt;3' exoribonucleolytic mRNA decay pathway in a cap-independent manner. Negatively regulates trehalase activity. This Saccharomyces cerevisiae (strain ATCC 204508 / S288c) (Baker's yeast) protein is m7GpppX diphosphatase.